A 118-amino-acid polypeptide reads, in one-letter code: Mu-like prophage FluMu tail tube protein (118 aa).

The disordered stretch occupies residues 12–32; the sequence is RLNGKEWPSDNDGTLTPGGKE.

The protein to phage Mu protein M.

The polypeptide is Mu-like prophage FluMu tail tube protein (Haemophilus influenzae (strain ATCC 51907 / DSM 11121 / KW20 / Rd)).